The chain runs to 214 residues: Probable transaldolase (214 aa).

Lys83 (schiff-base intermediate with substrate) is an active-site residue.

Belongs to the transaldolase family. Type 3B subfamily.

The protein resides in the cytoplasm. It carries out the reaction D-sedoheptulose 7-phosphate + D-glyceraldehyde 3-phosphate = D-erythrose 4-phosphate + beta-D-fructose 6-phosphate. The protein operates within carbohydrate degradation; pentose phosphate pathway; D-glyceraldehyde 3-phosphate and beta-D-fructose 6-phosphate from D-ribose 5-phosphate and D-xylulose 5-phosphate (non-oxidative stage): step 2/3. In terms of biological role, transaldolase is important for the balance of metabolites in the pentose-phosphate pathway. The chain is Probable transaldolase from Geotalea daltonii (strain DSM 22248 / JCM 15807 / FRC-32) (Geobacter daltonii).